We begin with the raw amino-acid sequence, 514 residues long: Carboxysome shell carbonic anhydrase (514 aa).

Positions 1–144 (MNTRNTRSKQ…LTAATEQFSR (144 aa)) are N-terminal domain. The catalytic domain stretch occupies residues 151–397 (DDSASAIGFF…GRYPPNDIGH (247 aa)). Cys173 lines the Zn(2+) pocket. Asp175 (proton acceptor) is an active-site residue. Zn(2+)-binding residues include His242 and Cys253. A C-terminal domain region spans residues 398-514 (AERYISVGDG…GSPIEEVASA (117 aa)).

This sequence belongs to the beta-class carbonic anhydrase family. CsoSCA subfamily. As to quaternary structure, homodimer, may form filaments. The cofactor is Zn(2+).

The protein resides in the carboxysome. It catalyses the reaction hydrogencarbonate + H(+) = CO2 + H2O. Carbonic anhydrase activity is inhibited by ethoxyzolamide, dithiothreitol, cyanide, and divalent metal chelators dipicolinic acid and nitrilotriacetic acid. Functionally, reversible hydration of carbon dioxide. Essential for chemolithotrophic carbon dioxide fixation, supplies CO(2) to RuBisCO (ribulose bisphosphate carboxylase, cbbL-cbbS) in the carboxysome. There are estimated to be 40 CsoSCA dimers per carboxysome. In terms of biological role, unlike beta-carboxysomes, alpha-carboxysomes (Cb) can form without cargo protein. CsoS2 is essential for Cb formation and is also capable of targeting foreign proteins to the Cb. The Cb shell assembles with the aid of CsoS2; CsoS1A, CsoS1B and CsoS1C form the majority of the shell while CsoS4A and CsoS4B form vertices. CsoS1D forms pseudohexamers that probably control metabolite flux into and out of the shell. In Halothiobacillus neapolitanus (strain ATCC 23641 / c2) (Thiobacillus neapolitanus), this protein is Carboxysome shell carbonic anhydrase.